Here is a 197-residue protein sequence, read N- to C-terminus: Small ribosomal subunit protein uS4c (197 aa).

Positions 92 to 153 (MRLDAVVYRL…APIVEHAKTF (62 aa)) constitute an S4 RNA-binding domain.

The protein belongs to the universal ribosomal protein uS4 family. In terms of assembly, part of the 30S ribosomal subunit. Contacts protein S5. The interaction surface between S4 and S5 is involved in control of translational fidelity.

It is found in the plastid. The protein resides in the chloroplast. One of the primary rRNA binding proteins, it binds directly to 16S rRNA where it nucleates assembly of the body of the 30S subunit. In terms of biological role, with S5 and S12 plays an important role in translational accuracy. The polypeptide is Small ribosomal subunit protein uS4c (rps4) (Ostreococcus tauri).